A 173-amino-acid chain; its full sequence is Large ribosomal subunit protein uL10 (173 aa).

The protein belongs to the universal ribosomal protein uL10 family. As to quaternary structure, part of the ribosomal stalk of the 50S ribosomal subunit. The N-terminus interacts with L11 and the large rRNA to form the base of the stalk. The C-terminus forms an elongated spine to which L12 dimers bind in a sequential fashion forming a multimeric L10(L12)X complex.

In terms of biological role, forms part of the ribosomal stalk, playing a central role in the interaction of the ribosome with GTP-bound translation factors. The polypeptide is Large ribosomal subunit protein uL10 (Bifidobacterium adolescentis (strain ATCC 15703 / DSM 20083 / NCTC 11814 / E194a)).